The chain runs to 89 residues: Small ribosomal subunit protein uS15 (89 aa).

It belongs to the universal ribosomal protein uS15 family. In terms of assembly, part of the 30S ribosomal subunit. Forms a bridge to the 50S subunit in the 70S ribosome, contacting the 23S rRNA.

In terms of biological role, one of the primary rRNA binding proteins, it binds directly to 16S rRNA where it helps nucleate assembly of the platform of the 30S subunit by binding and bridging several RNA helices of the 16S rRNA. Its function is as follows. Forms an intersubunit bridge (bridge B4) with the 23S rRNA of the 50S subunit in the ribosome. This is Small ribosomal subunit protein uS15 from Histophilus somni (strain 129Pt) (Haemophilus somnus).